The primary structure comprises 243 residues: Protein-L-isoaspartate O-methyltransferase 2 (243 aa).

Residues 21-42 (DACADRGHPSAERSTPETERRR) are disordered. A compositionally biased stretch (basic and acidic residues) spans 23-42 (CADRGHPSAERSTPETERRR). Residue S94 is part of the active site.

It belongs to the methyltransferase superfamily. L-isoaspartyl/D-aspartyl protein methyltransferase family.

Its subcellular location is the cytoplasm. It carries out the reaction [protein]-L-isoaspartate + S-adenosyl-L-methionine = [protein]-L-isoaspartate alpha-methyl ester + S-adenosyl-L-homocysteine. Catalyzes the methyl esterification of L-isoaspartyl residues in peptides and proteins that result from spontaneous decomposition of normal L-aspartyl and L-asparaginyl residues. It plays a role in the repair and/or degradation of damaged proteins. This is Protein-L-isoaspartate O-methyltransferase 2 from Anaeromyxobacter sp. (strain Fw109-5).